An 823-amino-acid chain; its full sequence is Protein FAM193B (823 aa).

Disordered regions lie at residues 1 to 78, 158 to 191, 209 to 281, and 381 to 409; these read MTRR…TSQS, SCKSQSCGGDSHSSSSSSSSSSSSSSSCHGNSGD, SPHS…PTTP, and CEADEGLGEEEDSSSERSSCTSSSTHQRD. Over residues 26–36 the composition is skewed to pro residues; the sequence is PQAPEPPPPPS. Basic and acidic residues predominate over residues 52 to 64; it reads PYRDDPREEDEPK. 2 stretches are compositionally biased toward low complexity: residues 168–184 and 263–281; these read SHSSSSSSSSSSSSSSS and SHPGSFGSPPHPHLLPTTP. A compositionally biased stretch (acidic residues) spans 382–393; it reads EADEGLGEEEDS. Residues 422-484 are a coiled coil; the sequence is GHNAEKEKAQ…RLQEIKNTVK (63 aa). 2 disordered regions span residues 503–583 and 599–775; these read FSKE…PENG and WVKT…PKDM. Polar residues-rich tracts occupy residues 516 to 526 and 641 to 657; these read LAPSNPSGSSE and QGNQAKKSEVSPASQSP. A phosphoserine mark is found at Ser-694, Ser-706, and Ser-813.

It belongs to the FAM193 family.

The protein localises to the cytoplasm. Its subcellular location is the nucleus. In Bos taurus (Bovine), this protein is Protein FAM193B (FAM193B).